The sequence spans 353 residues: MGWNELVSRAESRWMEGTGPHADIVLSSRIRLARNLDDLPFPQRMSEPDTERLLQAAEAGVREINLVGFPSRVELYRLADTTPLDRQILVEKHLISPQQSKEVMAKAVAISEDEAISIMVNEEDHLRIQVLASGLQLQEAWRVASQVDDALEQRLQFAFDEQLGYLTACPTNVGTGLRASVMMHLPALVLTQQAGRLFHNLSQLGLVVRGLYGEGTEAAGQIFQISNQTSLGKAEEEIIANLEAIARTVIDTEEQARRHLYGEMRLQIEDRVSRAYGILTTARMISSEEAMRLLSDVRLGVALGVVPKIDYRILNELLVAMQPACLQRQAGRELNPLERDVRRAALIRARLSA.

The Phosphagen kinase C-terminal domain maps to isoleucine 24–alanine 256. Residues serine 27–arginine 31, histidine 93, arginine 127, arginine 178–methionine 182, and arginine 209–glutamate 214 each bind ATP. The short motif at arginine 339–alanine 344 is the RDXXRA motif of the pArg binding pocket involved in allosteric regulation element.

The protein belongs to the ATP:guanido phosphotransferase family.

It carries out the reaction L-arginyl-[protein] + ATP = N(omega)-phospho-L-arginyl-[protein] + ADP + H(+). With respect to regulation, appears to be allosterically activated by the binding of pArg-containing polypeptides to the pArg-binding pocket localized in the C-terminal domain of McsB. Catalyzes the specific phosphorylation of arginine residues in proteins. The chain is Protein-arginine kinase from Symbiobacterium thermophilum (strain DSM 24528 / JCM 14929 / IAM 14863 / T).